The sequence spans 163 residues: Nucleotide-binding protein Dde_2479 (163 aa).

The protein belongs to the YajQ family.

In terms of biological role, nucleotide-binding protein. The protein is Nucleotide-binding protein Dde_2479 of Oleidesulfovibrio alaskensis (strain ATCC BAA-1058 / DSM 17464 / G20) (Desulfovibrio alaskensis).